Reading from the N-terminus, the 521-residue chain is Lymphocyte activation gene 3 protein (521 aa).

The N-terminal stretch at 1–23 (MREDLLLGFLLLGLLWEAPVVSS) is a signal peptide. Residues 24 to 442 (GPGKELPVVW…ISGDLKGGHL (419 aa)) lie on the Extracellular side of the membrane. An Ig-like V-type domain is found at 37-163 (GAPVHLPCSL…LSCSLRLRVG (127 aa)). Residues 37-246 (GAPVHLPCSL…LTYRDGFNVS (210 aa)) form an interaction with FGL1 region. Cys-44 and Cys-156 are oxidised to a cystine. Ig-like C2-type domains lie at 165–246 (ASMI…FNVS), 258–341 (PVAP…ATVT), and 345–412 (ITVT…EGQR). N-linked (GlcNAc...) asparagine glycosylation occurs at Asn-184. Cys-185 and Cys-235 are joined by a disulfide. N-linked (GlcNAc...) asparagine glycosylation is found at Asn-244, Asn-309, Asn-337, and Asn-381. A disulfide bridge links Cys-276 with Cys-327. Cys-363 and Cys-405 are oxidised to a cystine. A connecting peptide region spans residues 422–442 (ESSSGAHSARRISGDLKGGHL). Residues 443 to 463 (VLVLILGALSLFLLVAGAFGF) traverse the membrane as a helical segment. The Cytoplasmic segment spans residues 464–521 (HWWRKQLLLRRFSALEHGIQPFPAQRKIEELERELETEMGQEPEPEPEPQLEPEPRQL). Residues 490–495 (KIEELE) carry the KIEELE motif motif. Residues 493–518 (ELERELETEMGQEPEPEPEPQLEPEP) form a 13 X 2 AA tandem repeats of E-X region. The disordered stretch occupies residues 493–521 (ELERELETEMGQEPEPEPEPQLEPEPRQL). Acidic residues predominate over residues 500 to 514 (TEMGQEPEPEPEPQL).

Belongs to the LAG3 family. Interacts with MHC class II (MHC-II); selectively recognizes stable complexes of peptide and MHC-II. Interacts with FGL1 (via the Fibrinogen C-terminal domain). In terms of processing, proteolytically cleaved by ADAM10 and ADAM17 within the connecting peptide region, leading to release of Secreted lymphocyte activation gene 3 protein (sLAG-3). ADAM10 mediates constitutive cleavage, but cleavage increases following T-cell activation, whereas shedding by ADAM17 is induced by TCR signaling in a PRKCQ-dependent manner. As to expression, primarily expressed in activated CD4(+) and CD8(+) T-cells. Also expressed in a subset of regulatory T-cells (Tregs), such as natural CD4(+)CD25(+) Tregs. Also expressed on plasmacytoid dendritic cells (pDCs).

The protein resides in the cell membrane. The protein localises to the secreted. Its function is as follows. Lymphocyte activation gene 3 protein: Inhibitory receptor on antigen activated T-cells. Delivers inhibitory signals upon binding to ligands, such as FGL1. FGL1 constitutes a major ligand of LAG3 and is responsible for LAG3 T-cell inhibitory function. Following TCR engagement, LAG3 associates with CD3-TCR in the immunological synapse and directly inhibits T-cell activation. May inhibit antigen-specific T-cell activation in synergy with PDCD1/PD-1, possibly by acting as a coreceptor for PDCD1/PD-1. Negatively regulates the proliferation, activation, effector function and homeostasis of both CD8(+) and CD4(+) T-cells. Also mediates immune tolerance: constitutively expressed on a subset of regulatory T-cells (Tregs) and contributes to their suppressive function. Also acts as a negative regulator of plasmacytoid dendritic cell (pDCs) activation. Binds MHC class II (MHC-II); the precise role of MHC-II-binding is however unclear. In terms of biological role, may function as a ligand for MHC class II (MHC-II) on antigen-presenting cells (APC), promoting APC activation/maturation and driving Th1 immune response. This Mus musculus (Mouse) protein is Lymphocyte activation gene 3 protein.